Reading from the N-terminus, the 785-residue chain is Formin-like protein 3 (785 aa).

The first 20 residues, 1 to 20 (MGRLRLAFLAISLVVFVCVS), serve as a signal peptide directing secretion. A disordered region spans residues 96–145 (YDWLAPASSPNEPPAETPDESSPSPSEETPSVVAPSQSVPGPPRPPPQRE). Residues 115–134 (ESSPSPSEETPSVVAPSQSV) show a composition bias toward low complexity. The helical transmembrane segment at 154–174 (LIIAVASTAVLTFVFVALMFL) threads the bilayer. Disordered regions lie at residues 184 to 228 (AVGS…KKRS), 241 to 329 (EFST…APKT), and 730 to 785 (ETTK…SSPS). Positions 201–223 (STGSTENSPTVASTSRKMFSVAS) are enriched in polar residues. Over residues 256-303 (LKLPPGRSAPPPPPAAAPPPQPPPPPPPKPQPPPPPKIARPPPAPPKG) the composition is skewed to pro residues. The region spanning 321–747 (DSETGAPKTK…SGKKESEMTT (427 aa)) is the FH2 domain. Residues 745–754 (MTTSDSNQPS) show a composition bias toward polar residues. The segment covering 773–785 (SDDSDDEEDSSPS) has biased composition (acidic residues).

Belongs to the formin-like family. Class-I subfamily.

The protein localises to the membrane. Its function is as follows. Acts as actin nucleation factor that directs the formation of actin cables and polarized growth in pollen tubes. In Arabidopsis thaliana (Mouse-ear cress), this protein is Formin-like protein 3 (FH3).